The chain runs to 502 residues: MTESVGGNKLVDFLVNVQSILNAASVKCHVVDESFPAKFFEKNPDKIYESYCKFIKNRSNSEGLIRNEDKLVLTTINKRFENGEYEPIQGGFYKLYHDIKLVCTILIHFYPQGTRNYQLVDKFYKFSSELLLRECCRIGIALTQTNNIKSRSGKLLSGNEMDEYDDDDATELDKIISYDFIKISMNYTVPISQTYQIRTKDMDLFSSIISKSNLDKRPHELPNTNFKINNVLPQTDIENEAPRLGFVGANTSNIPDPTLPPTEMMTRFLHPNWYALPTTVWLKYGNYNSWAPSFNENGTVVDSTTRGLIWLERIGYMDLYEKNEKKVKQEELLNTNEEGINRKQNDENNKNVDGKSNGVQDDGGDNDNDATIASANSESTENKEQFIIKLQNLYNWTPSNYIGDDEIENFRNGTPDKLVSDSLLKLKRLRKERILNKVLKPTTEERELYFKVKRILKEVILAKKVSKVPINNVRAFPVLQTNYNGSIPVVRAQPGRKRKHKK.

Residues 19–134 (SILNAASVKC…KFSSELLLRE (116 aa)) form the Bromo domain. Residues 336-378 (NEEGINRKQNDENNKNVDGKSNGVQDDGGDNDNDATIASANSE) are disordered. Residues 339-353 (GINRKQNDENNKNVD) are compositionally biased toward basic and acidic residues.

In terms of assembly, component of the two forms of the RSC complex composed of at least either RSC1 or RSC2, and ARP7, ARP9, LDB7, NPL6, RSC3, RSC30, RSC4, RSC58, RSC6, RSC8, RSC9, SFH1, STH1, HTL1 and probably RTT102. The complexes interact with histone and histone variant components of centromeric chromatin.

Its subcellular location is the nucleus. In terms of biological role, component of the chromatin structure-remodeling complex (RSC), which is involved in transcription regulation and nucleosome positioning. RSC is responsible for the transfer of a histone octamer from a nucleosome core particle to naked DNA. The reaction requires ATP and involves an activated RSC-nucleosome intermediate. Remodeling reaction also involves DNA translocation, DNA twist and conformational change. As a reconfigurer of centromeric and flanking nucleosomes, RSC complex is required both for proper kinetochore function in chromosome segregation and, via a PKC1-dependent signaling pathway, for organization of the cellular cytoskeleton. The polypeptide is Chromatin structure-remodeling complex protein RSC58 (RSC58) (Saccharomyces cerevisiae (strain ATCC 204508 / S288c) (Baker's yeast)).